The primary structure comprises 124 residues: Large ribosomal subunit protein uL29 (124 aa).

This sequence belongs to the universal ribosomal protein uL29 family.

The polypeptide is Large ribosomal subunit protein uL29 (RPL35) (Triticum aestivum (Wheat)).